A 268-amino-acid chain; its full sequence is Phosphatidylglycerol--prolipoprotein diacylglyceryl transferase (268 aa).

7 helical membrane-spanning segments follow: residues 27–47, 66–86, 104–124, 130–150, 181–201, 208–228, and 242–262; these read PALR…MWLL, LLFY…VLFY, GGMS…YITW, FFAV…AGRI, PSQL…LYWF, VGAV…IVET, and LMTM…YLIL. Residue arginine 149 coordinates a 1,2-diacyl-sn-glycero-3-phospho-(1'-sn-glycerol).

This sequence belongs to the Lgt family.

The protein resides in the cell inner membrane. The enzyme catalyses L-cysteinyl-[prolipoprotein] + a 1,2-diacyl-sn-glycero-3-phospho-(1'-sn-glycerol) = an S-1,2-diacyl-sn-glyceryl-L-cysteinyl-[prolipoprotein] + sn-glycerol 1-phosphate + H(+). The protein operates within protein modification; lipoprotein biosynthesis (diacylglyceryl transfer). Functionally, catalyzes the transfer of the diacylglyceryl group from phosphatidylglycerol to the sulfhydryl group of the N-terminal cysteine of a prolipoprotein, the first step in the formation of mature lipoproteins. The sequence is that of Phosphatidylglycerol--prolipoprotein diacylglyceryl transferase from Shewanella oneidensis (strain ATCC 700550 / JCM 31522 / CIP 106686 / LMG 19005 / NCIMB 14063 / MR-1).